A 121-amino-acid chain; its full sequence is Small ribosomal subunit protein uS13 (121 aa).

Positions 92–121 are disordered; that stretch reads KRGLPVRGQRTRTNARTRKGPRRAAASLKK.

It belongs to the universal ribosomal protein uS13 family. Part of the 30S ribosomal subunit. Forms a loose heterodimer with protein S19. Forms two bridges to the 50S subunit in the 70S ribosome.

In terms of biological role, located at the top of the head of the 30S subunit, it contacts several helices of the 16S rRNA. In the 70S ribosome it contacts the 23S rRNA (bridge B1a) and protein L5 of the 50S subunit (bridge B1b), connecting the 2 subunits; these bridges are implicated in subunit movement. Contacts the tRNAs in the A and P-sites. This Bordetella bronchiseptica (strain ATCC BAA-588 / NCTC 13252 / RB50) (Alcaligenes bronchisepticus) protein is Small ribosomal subunit protein uS13.